A 146-amino-acid chain; its full sequence is Putative pre-16S rRNA nuclease (146 aa).

The protein belongs to the YqgF nuclease family.

It is found in the cytoplasm. Functionally, could be a nuclease involved in processing of the 5'-end of pre-16S rRNA. In Paraburkholderia xenovorans (strain LB400), this protein is Putative pre-16S rRNA nuclease.